Here is a 574-residue protein sequence, read N- to C-terminus: Polyamine aminopropyltransferase (574 aa).

7 consecutive transmembrane segments (helical) span residues 22-42 (VLLL…EYLL), 55-75 (AAIY…AFAA), 90-110 (LTVA…IGFG), 144-164 (LPYF…PLIA), 188-208 (IGAG…DIQL), 209-229 (AAAL…WRFW), and 237-257 (LLLA…IQGP). The interval 254–510 (IQGPSWEQQF…ATLDGKDAQH (257 aa)) is spermidine synthase. Positions 257–505 (PSWEQQFNNL…WGWSIATLDG (249 aa)) constitute a PABS domain. An S-methyl-5'-thioadenosine-binding site is contributed by Gln281. Positions 317 and 341 each coordinate spermidine. Residues Asp360 and 403 to 404 (DA) contribute to the S-methyl-5'-thioadenosine site. Asp424 functions as the Proton acceptor in the catalytic mechanism.

The protein belongs to the spermidine/spermine synthase family. As to quaternary structure, homodimer or homotetramer.

It is found in the cell membrane. It catalyses the reaction S-adenosyl 3-(methylsulfanyl)propylamine + putrescine = S-methyl-5'-thioadenosine + spermidine + H(+). Its pathway is amine and polyamine biosynthesis; spermidine biosynthesis; spermidine from putrescine: step 1/1. Its function is as follows. Catalyzes the irreversible transfer of a propylamine group from the amino donor S-adenosylmethioninamine (decarboxy-AdoMet) to putrescine (1,4-diaminobutane) to yield spermidine. The polypeptide is Polyamine aminopropyltransferase (Shewanella oneidensis (strain ATCC 700550 / JCM 31522 / CIP 106686 / LMG 19005 / NCIMB 14063 / MR-1)).